A 729-amino-acid chain; its full sequence is Fatty acid oxidation complex subunit alpha (729 aa).

The segment at 1–189 (MLYKGDTLYL…KIGLVDGVVK (189 aa)) is enoyl-CoA hydratase/isomerase. Position 296 (Asp296) interacts with substrate. The tract at residues 311 to 729 (ETPKQAAVLG…ARAVGDLKTA (419 aa)) is 3-hydroxyacyl-CoA dehydrogenase. NAD(+)-binding positions include Met324, Asp343, 400–402 (VVE), Lys407, and Ser429. His450 functions as the For 3-hydroxyacyl-CoA dehydrogenase activity in the catalytic mechanism. Asn453 serves as a coordination point for NAD(+). Positions 500 and 660 each coordinate substrate.

It in the N-terminal section; belongs to the enoyl-CoA hydratase/isomerase family. This sequence in the C-terminal section; belongs to the 3-hydroxyacyl-CoA dehydrogenase family. Heterotetramer of two alpha chains (FadB) and two beta chains (FadA).

It catalyses the reaction a (3S)-3-hydroxyacyl-CoA + NAD(+) = a 3-oxoacyl-CoA + NADH + H(+). The enzyme catalyses a (3S)-3-hydroxyacyl-CoA = a (2E)-enoyl-CoA + H2O. The catalysed reaction is a 4-saturated-(3S)-3-hydroxyacyl-CoA = a (3E)-enoyl-CoA + H2O. It carries out the reaction (3S)-3-hydroxybutanoyl-CoA = (3R)-3-hydroxybutanoyl-CoA. It catalyses the reaction a (3Z)-enoyl-CoA = a 4-saturated (2E)-enoyl-CoA. The enzyme catalyses a (3E)-enoyl-CoA = a 4-saturated (2E)-enoyl-CoA. It functions in the pathway lipid metabolism; fatty acid beta-oxidation. Functionally, involved in the aerobic and anaerobic degradation of long-chain fatty acids via beta-oxidation cycle. Catalyzes the formation of 3-oxoacyl-CoA from enoyl-CoA via L-3-hydroxyacyl-CoA. It can also use D-3-hydroxyacyl-CoA and cis-3-enoyl-CoA as substrate. The polypeptide is Fatty acid oxidation complex subunit alpha (Escherichia fergusonii (strain ATCC 35469 / DSM 13698 / CCUG 18766 / IAM 14443 / JCM 21226 / LMG 7866 / NBRC 102419 / NCTC 12128 / CDC 0568-73)).